A 146-amino-acid polypeptide reads, in one-letter code: 1,4-dihydroxy-2-naphthoyl-CoA hydrolase (146 aa).

D19 is a catalytic residue.

Belongs to the 4-hydroxybenzoyl-CoA thioesterase family. DHNA-CoA hydrolase subfamily.

It carries out the reaction 1,4-dihydroxy-2-naphthoyl-CoA + H2O = 1,4-dihydroxy-2-naphthoate + CoA + H(+). It functions in the pathway cofactor biosynthesis; phylloquinone biosynthesis. It participates in quinol/quinone metabolism; 1,4-dihydroxy-2-naphthoate biosynthesis; 1,4-dihydroxy-2-naphthoate from chorismate: step 7/7. Its function is as follows. Catalyzes the hydrolysis of 1,4-dihydroxy-2-naphthoyl-CoA (DHNA-CoA) to 1,4-dihydroxy-2-naphthoate (DHNA), a reaction involved in phylloquinone (vitamin K1) biosynthesis. This Thermosynechococcus vestitus (strain NIES-2133 / IAM M-273 / BP-1) protein is 1,4-dihydroxy-2-naphthoyl-CoA hydrolase.